A 310-amino-acid chain; its full sequence is uncharacterized protein (310 aa).

Disordered stretches follow at residues 22–163 (LARQ…PVEH) and 178–209 (EAEA…VEGD). 2 stretches are compositionally biased toward basic and acidic residues: residues 56-66 (IIRDDHHHAGP) and 183-197 (TEVR…ERHA). Residues 198-209 (AAAAAGTDVEGD) are compositionally biased toward low complexity. Helical transmembrane passes span 231–251 (ALVV…FIAF), 257–277 (WNSI…VVSV), and 286–306 (IAST…PLAL).

This sequence to M.leprae ML2433.

The protein localises to the cell membrane. This is an uncharacterized protein from Mycobacterium tuberculosis (strain CDC 1551 / Oshkosh).